The sequence spans 382 residues: Galactokinase (382 aa).

Position 34–37 (34–37 (EHTD)) interacts with substrate. ATP is bound at residue 124–130 (GAGLSSS). Residues Ser-130 and Glu-162 each coordinate Mg(2+). Residue Asp-174 is the Proton acceptor of the active site. Position 223 (Tyr-223) interacts with substrate.

Belongs to the GHMP kinase family. GalK subfamily.

It is found in the cytoplasm. The enzyme catalyses alpha-D-galactose + ATP = alpha-D-galactose 1-phosphate + ADP + H(+). The protein operates within carbohydrate metabolism; galactose metabolism. Functionally, catalyzes the transfer of the gamma-phosphate of ATP to D-galactose to form alpha-D-galactose-1-phosphate (Gal-1-P). This chain is Galactokinase, found in Shigella flexneri serotype 5b (strain 8401).